A 332-amino-acid chain; its full sequence is Phosphate acyltransferase (332 aa).

The protein belongs to the PlsX family. Homodimer. Probably interacts with PlsY.

The protein resides in the cytoplasm. The catalysed reaction is a fatty acyl-[ACP] + phosphate = an acyl phosphate + holo-[ACP]. Its pathway is lipid metabolism; phospholipid metabolism. In terms of biological role, catalyzes the reversible formation of acyl-phosphate (acyl-PO(4)) from acyl-[acyl-carrier-protein] (acyl-ACP). This enzyme utilizes acyl-ACP as fatty acyl donor, but not acyl-CoA. This Fusobacterium nucleatum subsp. nucleatum (strain ATCC 25586 / DSM 15643 / BCRC 10681 / CIP 101130 / JCM 8532 / KCTC 2640 / LMG 13131 / VPI 4355) protein is Phosphate acyltransferase.